Here is a 218-residue protein sequence, read N- to C-terminus: UPF0502 protein CJA_1529 (218 aa).

This sequence belongs to the UPF0502 family.

This is UPF0502 protein CJA_1529 from Cellvibrio japonicus (strain Ueda107) (Pseudomonas fluorescens subsp. cellulosa).